The chain runs to 391 residues: Succinyl-diaminopimelate desuccinylase (391 aa).

Residue histidine 67 participates in Zn(2+) binding. Residue aspartate 69 is part of the active site. Aspartate 101 is a binding site for Zn(2+). Glutamate 135 functions as the Proton acceptor in the catalytic mechanism. Positions 136, 164, and 353 each coordinate Zn(2+).

This sequence belongs to the peptidase M20A family. DapE subfamily. As to quaternary structure, homodimer. It depends on Zn(2+) as a cofactor. Requires Co(2+) as cofactor.

The enzyme catalyses N-succinyl-(2S,6S)-2,6-diaminopimelate + H2O = (2S,6S)-2,6-diaminopimelate + succinate. It participates in amino-acid biosynthesis; L-lysine biosynthesis via DAP pathway; LL-2,6-diaminopimelate from (S)-tetrahydrodipicolinate (succinylase route): step 3/3. Catalyzes the hydrolysis of N-succinyl-L,L-diaminopimelic acid (SDAP), forming succinate and LL-2,6-diaminopimelate (DAP), an intermediate involved in the bacterial biosynthesis of lysine and meso-diaminopimelic acid, an essential component of bacterial cell walls. The protein is Succinyl-diaminopimelate desuccinylase of Rickettsia bellii (strain OSU 85-389).